The primary structure comprises 120 residues: NAD(P)H-quinone oxidoreductase subunit 3, chloroplastic (120 aa).

The next 3 membrane-spanning stretches (helical) occupy residues 9-29 (IFWA…LFSG), 64-84 (MFAL…PWAM), and 88-108 (ILGV…IVGL).

It belongs to the complex I subunit 3 family. In terms of assembly, NDH is composed of at least 16 different subunits, 5 of which are encoded in the nucleus.

Its subcellular location is the plastid. It is found in the chloroplast thylakoid membrane. It carries out the reaction a plastoquinone + NADH + (n+1) H(+)(in) = a plastoquinol + NAD(+) + n H(+)(out). The catalysed reaction is a plastoquinone + NADPH + (n+1) H(+)(in) = a plastoquinol + NADP(+) + n H(+)(out). In terms of biological role, NDH shuttles electrons from NAD(P)H:plastoquinone, via FMN and iron-sulfur (Fe-S) centers, to quinones in the photosynthetic chain and possibly in a chloroplast respiratory chain. The immediate electron acceptor for the enzyme in this species is believed to be plastoquinone. Couples the redox reaction to proton translocation, and thus conserves the redox energy in a proton gradient. The polypeptide is NAD(P)H-quinone oxidoreductase subunit 3, chloroplastic (Spinacia oleracea (Spinach)).